The chain runs to 496 residues: Cyclin-dependent kinase 16 (496 aa).

Residues 1–95 form a disordered region; sequence MDRMKKIKRQ…SATSSDEVQS (95 aa). S12 bears the Phosphoserine; by BRSK2 mark. Phosphoserine is present on residues S36, S42, S64, S65, S78, S82, and S89. A compositionally biased stretch (basic and acidic residues) spans 69–78; that stretch reads IVHEDMKMGS. Residues 83 to 93 are compositionally biased toward polar residues; that stretch reads DQASATSSDEV. At S95 the chain carries Phosphoserine; by CDK5. 6 positions are modified to phosphoserine: S110, S119, S138, S146, S153, and S155. The region spanning 165-446 is the Protein kinase domain; the sequence is YIKLDKLGEG…AEDARKHPFF (282 aa). ATP-binding positions include 171–179 and K194; that span reads LGEGTYATV. At T175 the chain carries Phosphothreonine. Catalysis depends on D286, which acts as the Proton acceptor. T380 carries the phosphothreonine modification. Phosphoserine occurs at positions 391, 478, and 480.

Belongs to the protein kinase superfamily. CMGC Ser/Thr protein kinase family. CDC2/CDKX subfamily. As to quaternary structure, found in a complex containing CABLES1, CDK17 and TDRD7. Interacts with BRSK2. Identified in a complex with NSF, syntaxin-1, synaptotagmin, SYN1, SYP and CDK5R1. Interacts with YWHAH, YWHAQ and YWHAZ. Interacts with CCNY; this interaction increases the CDK16 kinase activity. Interacts with CCNYL1; this interaction mutually increases the stability of CDK16 and CCNYL1 and increases the kinase activity of CDK16. Interacts with NSF. Phosphorylation of CDK16 is essential for the binding of CCNY, but also essential for the regulation of CDK16 kinase activity. Phosphorylation of CDK16 is essential for the binding of CCNYl1, but also essential for the regulation of CDK16 kinase activity. Ser-146 and Ser-153 are the critical sites for the binding of CCNYL1 and for modulating CDK16 kinase activity. Phosphorylation at Ser-153 inhibits kinase activity. Highly expressed in testis and brain, and detected at lower levels in heart, skeletal muscle, adipose tissue, lung, spleen and pancreas (at protein level). Ubiquitous with highest levels in testis and brain, with longer form predominant in all tissues except the testis.

The protein localises to the cytoplasm. Its subcellular location is the cytoplasmic vesicle. The protein resides in the secretory vesicle. It localises to the cell membrane. It is found in the synapse. The protein localises to the synaptosome. It carries out the reaction L-seryl-[protein] + ATP = O-phospho-L-seryl-[protein] + ADP + H(+). The enzyme catalyses L-threonyl-[protein] + ATP = O-phospho-L-threonyl-[protein] + ADP + H(+). Protein kinase that plays a role in vesicle-mediated transport processes and exocytosis. Can phosphorylate CCNY at 'Ser-336' (in vitro). Plays a role in the regulation of insulin secretion in response to changes in blood glucose levels. Regulates GH1 release by brain neurons. Phosphorylates NSF, and thereby regulates NSF oligomerization. Required for normal spermatogenesis. Regulates neuron differentiation and dendrite development. In Mus musculus (Mouse), this protein is Cyclin-dependent kinase 16 (Cdk16).